The primary structure comprises 678 residues: MTKNLLVELGLEELPAYVVTPSEKQLGEKMAAFLKENRLSFEAIQTFSTPRRLAVRVTGLSDKQSDLTEDFKGPAKKIALDSDGNFTKAAQGFVRGKGLTVEDIEFREIKGEEYVYVTKEEVGQAVEAIVPGVVDVLKSLTFPVSMHWAGNSFEYIRPVHTLTVLLDEQEFDLDFLDIKGSRVSRGHRFLGKETKIQSALSYEEDLRKQFVIADPCEREQMIVDQIKEIEAKHGVRIEIDADLLNEVLNLVEYPTAFMGSFDAKYLEVPEEVLVTSMKEHQRYFVVRDQDGKLLPNFISVRNGNAERLKNVIKGNEKVLVARLEDGEFFWREDQKLVISDLVEKLNNVTFHEKIGSLREHMIRTGQITVLLAEKAGLSVDETVDLARAAAIYKFDLLTGMVGEFDELQGIMGEKYTLLAGETPAVAAAIREHYMPTSAEGELPESKVGAVLAIADKLDTILSFFSVGLIPSGSNDPYALRRATQGVVRILDAFGWHIAMDELIDSLYALKFDSLTYENKAEVMDFIKARVDKMMGSTPKDIKEAVLAGSNFVVADMLEAASALVEVSKEEYFKPSVESLSRAFNLAEKAEGVATVDSALFENDQEKALAEAVETLVLSGPASQQLKQLFALSPVIDAFFENTMVMAEDQAVRQNRLAILSQLTKKAAKFACFNQINTK.

The protein belongs to the class-II aminoacyl-tRNA synthetase family. As to quaternary structure, tetramer of two alpha and two beta subunits.

It is found in the cytoplasm. The enzyme catalyses tRNA(Gly) + glycine + ATP = glycyl-tRNA(Gly) + AMP + diphosphate. This chain is Glycine--tRNA ligase beta subunit, found in Streptococcus pneumoniae (strain P1031).